We begin with the raw amino-acid sequence, 452 residues long: Flavanone 7-O-glucoside 2''-O-beta-L-rhamnosyltransferase (452 aa).

The Proton acceptor role is filled by H21. Residue H21 coordinates an anthocyanidin. Catalysis depends on D121, which acts as the Charge relay. Residues 136–156 form a helical membrane-spanning segment; it reads IAAILFLPLSAVACSFLLHNI. Residues S268, V330, H347, G351, S352, and E355 each contribute to the UDP-beta-L-rhamnose site. Residues 407–436 adopt a coiled-coil conformation; that stretch reads KHVVLQEEAKQIRRKANEISESMKKIGDAE.

It belongs to the UDP-glycosyltransferase family. Monomer. In terms of tissue distribution, expressed in young fruits and leaves.

The protein localises to the membrane. It carries out the reaction flavanone 7-O-beta-D-glucoside + UDP-beta-L-rhamnose = flavanone 7-O-[alpha-L-rhamnosyl-(1-&gt;2)-beta-D-glucoside] + UDP + H(+). Its function is as follows. Involved in the production of the bitter neohesperidosides in citrus. Shows a strict specificity for UDP-rhamnose as donor. The polypeptide is Flavanone 7-O-glucoside 2''-O-beta-L-rhamnosyltransferase (C12RT1) (Citrus maxima (Pomelo)).